The primary structure comprises 349 residues: ATP phosphoribosyltransferase regulatory subunit (349 aa).

The interval 325–349 (ANGRGRGVRPRRASARGGRAGTRPR) is disordered. The segment covering 339–349 (ARGGRAGTRPR) has biased composition (low complexity).

It belongs to the class-II aminoacyl-tRNA synthetase family. HisZ subfamily. As to quaternary structure, heteromultimer composed of HisG and HisZ subunits.

Its subcellular location is the cytoplasm. It participates in amino-acid biosynthesis; L-histidine biosynthesis; L-histidine from 5-phospho-alpha-D-ribose 1-diphosphate: step 1/9. Required for the first step of histidine biosynthesis. May allow the feedback regulation of ATP phosphoribosyltransferase activity by histidine. The chain is ATP phosphoribosyltransferase regulatory subunit from Anaeromyxobacter dehalogenans (strain 2CP-C).